Reading from the N-terminus, the 87-residue chain is Exendin-3 (87 aa).

The N-terminal stretch at 1–21 (MKIILWLCVFGLFLATLFPVS) is a signal peptide. A propeptide spanning residues 22–45 (WQMPVESGLSSEDSASSESFASKI) is cleaved from the precursor. Position 86 is a serine amide (serine 86).

This sequence belongs to the glucagon family. Expressed by the venom gland.

The protein resides in the secreted. Stimulates vasoactive intestinal peptide (VIP) receptors in high concentrations (&gt;100 nM), resulting in both an increase in cAMP and amylase secretion from pancreatic acini, although at low concentrations (between 0.3 and 3 nM) it increases cAMP without stimulating amylase release. Stimulates the GLP-1 receptor (GLP1R). Induces hypotension that is mediated by relaxation of cardiac smooth muscle. The polypeptide is Exendin-3 (Heloderma horridum horridum (Mexican beaded lizard)).